The following is a 303-amino-acid chain: Ribosomal RNA small subunit methyltransferase A (303 aa).

The span at Met1–Ser19 shows a compositional bias: low complexity. The segment at Met1–Leu34 is disordered. Positions 55, 57, 82, 104, 130, and 149 each coordinate S-adenosyl-L-methionine.

It belongs to the class I-like SAM-binding methyltransferase superfamily. rRNA adenine N(6)-methyltransferase family. RsmA subfamily.

The protein localises to the cytoplasm. The enzyme catalyses adenosine(1518)/adenosine(1519) in 16S rRNA + 4 S-adenosyl-L-methionine = N(6)-dimethyladenosine(1518)/N(6)-dimethyladenosine(1519) in 16S rRNA + 4 S-adenosyl-L-homocysteine + 4 H(+). In terms of biological role, specifically dimethylates two adjacent adenosines (A1518 and A1519) in the loop of a conserved hairpin near the 3'-end of 16S rRNA in the 30S particle. May play a critical role in biogenesis of 30S subunits. In Gluconobacter oxydans (strain 621H) (Gluconobacter suboxydans), this protein is Ribosomal RNA small subunit methyltransferase A.